Reading from the N-terminus, the 217-residue chain is Large ribosomal subunit protein uL1 (217 aa).

Position 11 is a phosphotyrosine (Y11). K91 and K106 each carry N6-acetyllysine. Position 118 is an N6-acetyllysine; alternate (K118). Residue K118 forms a Glycyl lysine isopeptide (Lys-Gly) (interchain with G-Cter in SUMO1); alternate linkage. K118 is covalently cross-linked (Glycyl lysine isopeptide (Lys-Gly) (interchain with G-Cter in SUMO2); alternate). Residue K161 forms a Glycyl lysine isopeptide (Lys-Gly) (interchain with G-Cter in SUMO2) linkage.

The protein belongs to the universal ribosomal protein uL1 family. Component of the large ribosomal subunit.

Its subcellular location is the cytoplasm. Functionally, component of the large ribosomal subunit. The ribosome is a large ribonucleoprotein complex responsible for the synthesis of proteins in the cell. This is Large ribosomal subunit protein uL1 (RPL10A) from Oryctolagus cuniculus (Rabbit).